A 63-amino-acid chain; its full sequence is Large ribosomal subunit protein uL30 (63 aa).

The protein belongs to the universal ribosomal protein uL30 family. In terms of assembly, part of the 50S ribosomal subunit.

In Caulobacter sp. (strain K31), this protein is Large ribosomal subunit protein uL30.